The following is a 352-amino-acid chain: NAD(P)H pyrophosphatase NUDT13, mitochondrial (352 aa).

The N-terminal 20 residues, 1-20 (MSLYCGIACRRKFFWCYRLL), are a transit peptide targeting the mitochondrion. The Nudix hydrolase domain maps to 196 to 323 (PQMAPVAITL…PYTQQQNGTF (128 aa)). Positions 216–240 (RQSSFPKGMYSALAGFCDIGESVEE) match the Nudix box motif.

This sequence belongs to the Nudix hydrolase family. Requires Mg(2+) as cofactor. The cofactor is Mn(2+). As to expression, highly expressed in metastasis-suppressed chromosome 6 melanoma hybrids.

It localises to the mitochondrion. The enzyme catalyses NADH + H2O = reduced beta-nicotinamide D-ribonucleotide + AMP + 2 H(+). The catalysed reaction is NAD(+) + H2O = beta-nicotinamide D-ribonucleotide + AMP + 2 H(+). It catalyses the reaction NADPH + H2O = reduced beta-nicotinamide D-ribonucleotide + adenosine 2',5'-bisphosphate + 2 H(+). Its function is as follows. NAD(P)H pyrophosphatase that hydrolyzes NADH into NMNH and AMP, and NADPH into NMNH and 2',5'-ADP. Has a marked preference for the reduced pyridine nucleotides. Does not show activity toward NAD-capped RNAs; the NAD-cap is an atypical cap present at the 5'-end of some RNAs. This Homo sapiens (Human) protein is NAD(P)H pyrophosphatase NUDT13, mitochondrial.